We begin with the raw amino-acid sequence, 1361 residues long: DNA-directed RNA polymerase subunit beta' (1361 aa).

The Zn(2+) site is built by Cys-69, Cys-71, Cys-84, and Cys-87. Residues Asp-460, Asp-462, and Asp-464 each coordinate Mg(2+). Residues Cys-808, Cys-882, Cys-889, and Cys-892 each coordinate Zn(2+).

It belongs to the RNA polymerase beta' chain family. As to quaternary structure, the RNAP catalytic core consists of 2 alpha, 1 beta, 1 beta' and 1 omega subunit. When a sigma factor is associated with the core the holoenzyme is formed, which can initiate transcription. Requires Mg(2+) as cofactor. The cofactor is Zn(2+).

The catalysed reaction is RNA(n) + a ribonucleoside 5'-triphosphate = RNA(n+1) + diphosphate. DNA-dependent RNA polymerase catalyzes the transcription of DNA into RNA using the four ribonucleoside triphosphates as substrates. This chain is DNA-directed RNA polymerase subunit beta', found in Rickettsia bellii (strain RML369-C).